Here is a 189-residue protein sequence, read N- to C-terminus: Lutzicidin (189 aa).

Residues 1–22 form the signal peptide; it reads MQGFFWKTLLVVALCGTSSSLA. The propeptide occupies 23-155; the sequence is HRPLSYGEAL…DEEKDRPKRV (133 aa). 2 disulfide bridges follow: Cys-79–Cys-90 and Cys-101–Cys-118. The segment covering 125 to 148 has biased composition (acidic residues); the sequence is EEEEEDEEEQKAEVEKDEEKEDEE. Residues 125–152 form a disordered region; sequence EEEEEDEEEQKAEVEKDEEKEDEEKDRP.

Belongs to the cathelicidin family. In terms of tissue distribution, expressed by the venom gland.

It localises to the secreted. The protein resides in the target cell membrane. Its function is as follows. Potent antimicrobial peptide against Gram-negative and Gram-positive bacteria. Adopts an amphipathic alpha helical conformation, that may allow to partition into the target membrane. Low hemolytic activities have been observed on mammalian cells. In Bothrops lutzi (Sertao lancehead), this protein is Lutzicidin.